The primary structure comprises 343 residues: Ketol-acid reductoisomerase (NADP(+)) (343 aa).

Positions 7–186 constitute a KARI N-terminal Rossmann domain; that stretch reads TTVYYDEDAD…GCTRAGVIET (180 aa). NADP(+) is bound by residues 30-33, R53, S56, S58, and 88-91; these read YGSQ and DTIQ. The active site involves H112. G138 provides a ligand contact to NADP(+). The 143-residue stretch at 187-329 folds into the KARI C-terminal knotted domain; it reads SFQEEVETDL…ENLRELFAWG (143 aa). D195, E199, E231, and E235 together coordinate Mg(2+). A substrate-binding site is contributed by S256.

It belongs to the ketol-acid reductoisomerase family. The cofactor is Mg(2+).

It catalyses the reaction (2R)-2,3-dihydroxy-3-methylbutanoate + NADP(+) = (2S)-2-acetolactate + NADPH + H(+). It carries out the reaction (2R,3R)-2,3-dihydroxy-3-methylpentanoate + NADP(+) = (S)-2-ethyl-2-hydroxy-3-oxobutanoate + NADPH + H(+). Its pathway is amino-acid biosynthesis; L-isoleucine biosynthesis; L-isoleucine from 2-oxobutanoate: step 2/4. It participates in amino-acid biosynthesis; L-valine biosynthesis; L-valine from pyruvate: step 2/4. In terms of biological role, involved in the biosynthesis of branched-chain amino acids (BCAA). Catalyzes an alkyl-migration followed by a ketol-acid reduction of (S)-2-acetolactate (S2AL) to yield (R)-2,3-dihydroxy-isovalerate. In the isomerase reaction, S2AL is rearranged via a Mg-dependent methyl migration to produce 3-hydroxy-3-methyl-2-ketobutyrate (HMKB). In the reductase reaction, this 2-ketoacid undergoes a metal-dependent reduction by NADPH to yield (R)-2,3-dihydroxy-isovalerate. The polypeptide is Ketol-acid reductoisomerase (NADP(+)) (Haloarcula marismortui (strain ATCC 43049 / DSM 3752 / JCM 8966 / VKM B-1809) (Halobacterium marismortui)).